The following is a 138-amino-acid chain: ATP synthase epsilon chain (138 aa).

This sequence belongs to the ATPase epsilon chain family. As to quaternary structure, F-type ATPases have 2 components, CF(1) - the catalytic core - and CF(0) - the membrane proton channel. CF(1) has five subunits: alpha(3), beta(3), gamma(1), delta(1), epsilon(1). CF(0) has three main subunits: a, b and c.

It localises to the cell inner membrane. Its function is as follows. Produces ATP from ADP in the presence of a proton gradient across the membrane. This is ATP synthase epsilon chain from Ruthia magnifica subsp. Calyptogena magnifica.